We begin with the raw amino-acid sequence, 363 residues long: Peptide chain release factor 1 (363 aa).

At Gln237 the chain carries N5-methylglutamine. The span at 284 to 297 shows a compositional bias: basic and acidic residues; the sequence is ERAKQQSERSEQRR. A disordered region spans residues 284–306; it reads ERAKQQSERSEQRRLAVGSGDRS.

Belongs to the prokaryotic/mitochondrial release factor family. Post-translationally, methylated by PrmC. Methylation increases the termination efficiency of RF1.

It is found in the cytoplasm. Functionally, peptide chain release factor 1 directs the termination of translation in response to the peptide chain termination codons UAG and UAA. In Halorhodospira halophila (strain DSM 244 / SL1) (Ectothiorhodospira halophila (strain DSM 244 / SL1)), this protein is Peptide chain release factor 1.